Here is a 669-residue protein sequence, read N- to C-terminus: DNA mismatch repair protein MutL (669 aa).

The segment at Ser343–Glu408 is disordered. Residues Ala344 to Gln356 are compositionally biased toward basic and acidic residues. The segment covering Pro357–Val372 has biased composition (polar residues). Basic and acidic residues predominate over residues Thr390 to Glu408.

The protein belongs to the DNA mismatch repair MutL/HexB family.

Its function is as follows. This protein is involved in the repair of mismatches in DNA. It is required for dam-dependent methyl-directed DNA mismatch repair. May act as a 'molecular matchmaker', a protein that promotes the formation of a stable complex between two or more DNA-binding proteins in an ATP-dependent manner without itself being part of a final effector complex. This chain is DNA mismatch repair protein MutL, found in Vibrio parahaemolyticus serotype O3:K6 (strain RIMD 2210633).